Reading from the N-terminus, the 187-residue chain is Peptide deformylase (187 aa).

Residues Cys107 and His149 each contribute to the Fe cation site. Glu150 is a catalytic residue. His153 is a binding site for Fe cation.

The protein belongs to the polypeptide deformylase family. The cofactor is Fe(2+).

The enzyme catalyses N-terminal N-formyl-L-methionyl-[peptide] + H2O = N-terminal L-methionyl-[peptide] + formate. Functionally, removes the formyl group from the N-terminal Met of newly synthesized proteins. Requires at least a dipeptide for an efficient rate of reaction. N-terminal L-methionine is a prerequisite for activity but the enzyme has broad specificity at other positions. In Synechocystis sp. (strain ATCC 27184 / PCC 6803 / Kazusa), this protein is Peptide deformylase.